We begin with the raw amino-acid sequence, 308 residues long: Eukaryotic translation initiation factor 3 subunit G-B (308 aa).

Disordered stretches follow at residues 1–35 and 176–227; these read MPTG…KQDP and STAD…DDNA. The segment covering 185-194 has biased composition (low complexity); the sequence is GAEPEPAQAP. A compositionally biased stretch (basic and acidic residues) spans 209 to 227; that stretch reads GGSRRGESMQPNRRADDNA. In terms of domain architecture, RRM spans 227–305; it reads ATIRVTNLSE…LILNVEWAKP (79 aa).

This sequence belongs to the eIF-3 subunit G family. In terms of assembly, component of the eukaryotic translation initiation factor 3 (eIF-3) complex, which is composed of 13 subunits: eif3a, eif3b, eif3c, eif3d, eif3e, eif3f, eif3g, eif3h, eif3i, eif3j, eif3k, eif3l and eif3m.

It is found in the cytoplasm. Its function is as follows. RNA-binding component of the eukaryotic translation initiation factor 3 (eIF-3) complex, which is involved in protein synthesis of a specialized repertoire of mRNAs and, together with other initiation factors, stimulates binding of mRNA and methionyl-tRNAi to the 40S ribosome. The eIF-3 complex specifically targets and initiates translation of a subset of mRNAs involved in cell proliferation. This subunit can bind 18S rRNA. The polypeptide is Eukaryotic translation initiation factor 3 subunit G-B (eif3g-b) (Xenopus laevis (African clawed frog)).